A 201-amino-acid chain; its full sequence is Probable molybdenum cofactor guanylyltransferase (201 aa).

GTP-binding positions include 6 to 8, Lys-18, Asp-65, and Asp-97; that span reads LAG. Asp-97 serves as a coordination point for Mg(2+).

This sequence belongs to the MobA family. Requires Mg(2+) as cofactor.

The protein localises to the cytoplasm. It carries out the reaction Mo-molybdopterin + GTP + H(+) = Mo-molybdopterin guanine dinucleotide + diphosphate. Transfers a GMP moiety from GTP to Mo-molybdopterin (Mo-MPT) cofactor (Moco or molybdenum cofactor) to form Mo-molybdopterin guanine dinucleotide (Mo-MGD) cofactor. This is Probable molybdenum cofactor guanylyltransferase from Staphylococcus haemolyticus (strain JCSC1435).